We begin with the raw amino-acid sequence, 135 residues long: Transcriptional activator protein (135 aa).

Positions 17 to 32 (KIQHHIAKKRQVRRRR) match the Nuclear localization signal motif. A zinc finger spans residues 37 to 54 (CGCSYYIHLDCINHGFTH). The transactivation stretch occupies residues 120–135 (HLDDLTVSDWSFFKSL).

Belongs to the geminiviridae transcriptional activator protein family. As to quaternary structure, monomer. Homodimer. Homooligomer. Self-interaction correlates with nuclear localization and efficient activation of transcription. Monomers suppress local silencing by interacting with and inactivating host adenosine kinase 2 (ADK2) in the cytoplasm. Interacts with and inhibits host SNF1 kinase. Binds to ssDNA. May interact with host RPS27A. Phosphorylated.

It localises to the host nucleus. The protein resides in the host cytoplasm. In terms of biological role, multifunctional protein that modulates host antiviral defenses and promotes host attractiveness to insect vectors. Acts as a suppressor of RNA-mediated gene silencing, also known as post-transcriptional gene silencing (PTGS), a mechanism of plant viral defense that limits the accumulation of viral RNAs. TrAP suppresses the host RNA silencing by inhibiting adenosine kinase 2 (ADK2), a kinase involved in a general methylation pathway. Also suppresses the host basal defense by interacting with and inhibiting SNF1 kinase, a key regulator of cell metabolism implicated in innate antiviral defense. Functionally, inhibits signal transduction by the phytohormone jasmonate, making the infected plant more attractive to aphids, which are the second host to play a role as a dissemination vector. Acts by binding to ubiquitin precursor RPS27A, thereby preventing ubiquitin degradation of JAZ. This is Transcriptional activator protein from Tomato yellow leaf curl Sardinia virus (isolate Spain-1) (TYLCSV).